A 478-amino-acid chain; its full sequence is Adenylosuccinate lyase (478 aa).

Residues 14–15 (RY), 81–83 (KHD), and 107–108 (TS) contribute to the substrate site. The active-site Proton donor/acceptor is the H155. Q237 is a substrate binding site. The active-site Proton donor/acceptor is the S285. Substrate-binding residues include R299, R325, S330, and R334.

This sequence belongs to the lyase 1 family. Adenylosuccinate lyase subfamily. Homotetramer. Residues from neighboring subunits contribute catalytic and substrate-binding residues to each active site.

It catalyses the reaction N(6)-(1,2-dicarboxyethyl)-AMP = fumarate + AMP. The enzyme catalyses (2S)-2-[5-amino-1-(5-phospho-beta-D-ribosyl)imidazole-4-carboxamido]succinate = 5-amino-1-(5-phospho-beta-D-ribosyl)imidazole-4-carboxamide + fumarate. The protein operates within purine metabolism; AMP biosynthesis via de novo pathway; AMP from IMP: step 2/2. It participates in purine metabolism; IMP biosynthesis via de novo pathway; 5-amino-1-(5-phospho-D-ribosyl)imidazole-4-carboxamide from 5-amino-1-(5-phospho-D-ribosyl)imidazole-4-carboxylate: step 2/2. Functionally, catalyzes two non-sequential steps in de novo AMP synthesis: converts (S)-2-(5-amino-1-(5-phospho-D-ribosyl)imidazole-4-carboxamido)succinate (SAICAR) to fumarate plus 5-amino-1-(5-phospho-D-ribosyl)imidazole-4-carboxamide, and thereby also contributes to de novo IMP synthesis, and converts succinyladenosine monophosphate (SAMP) to AMP and fumarate. The polypeptide is Adenylosuccinate lyase (Caenorhabditis briggsae).